The sequence spans 5255 residues: Bacitracin synthase 1 (5255 aa).

The domain 1 (isoleucine-activating) stretch occupies residues Leu39–Ala612. Residues Val519–Ala531 show a composition bias toward basic and acidic residues. Positions Val519–Asn542 are disordered. Positions Ala539–His614 constitute a Carrier 1 domain. Ser574 carries the post-translational modification O-(pantetheine 4'-phosphoryl)serine. The tract at residues Thr621–Phe1037 is cyclization. The tract at residues His1109–Asp1648 is domain 2 (cysteine-activating). Carrier domains are found at residues Leu1580–Glu1655, Ala2616–Arg2691, Pro3659–Thr3733, and Ala5166–Glu5241. An O-(pantetheine 4'-phosphoryl)serine mark is found at Ser1615, Ser2651, Ser3694, and Ser5201. A domain 3 (leucine-activating) region spans residues Gly2124 to Arg2689. The interval Asp3164–Glu3732 is domain 4 (glutamine-activating). The interval Leu4668–Glu5249 is domain 5 (isoleucine-activating).

The protein belongs to the ATP-dependent AMP-binding enzyme family. As to quaternary structure, large multienzyme complex of BA1, BA2 and BA3. Pantetheine 4'-phosphate is required as a cofactor.

The enzyme catalyses L-glutamate = D-glutamate. Its pathway is antibiotic biosynthesis; bacitracin biosynthesis. Functionally, activates five amino acids, incorporates two D-amino acids, releases and cyclizes the mature bacitracin. In Bacillus licheniformis, this protein is Bacitracin synthase 1 (bacA).